Consider the following 546-residue polypeptide: Chaperonin GroEL (546 aa).

ATP-binding positions include 29–32 (TMGP), Lys50, 86–90 (DGTTT), Gly414, and Asp492.

It belongs to the chaperonin (HSP60) family. As to quaternary structure, forms a cylinder of 14 subunits composed of two heptameric rings stacked back-to-back. Interacts with the co-chaperonin GroES.

Its subcellular location is the cytoplasm. The enzyme catalyses ATP + H2O + a folded polypeptide = ADP + phosphate + an unfolded polypeptide.. Its function is as follows. Together with its co-chaperonin GroES, plays an essential role in assisting protein folding. The GroEL-GroES system forms a nano-cage that allows encapsulation of the non-native substrate proteins and provides a physical environment optimized to promote and accelerate protein folding. The protein is Chaperonin GroEL of Helicobacter pylori (strain G27).